A 596-amino-acid chain; its full sequence is Actin-related protein 9 (596 aa).

Residues 148-178 are disordered; it reads LASPAETSPDKGDASASEAVPDVTDSKDTSE.

The protein belongs to the actin family. ARP8 subfamily.

The protein is Actin-related protein 9 (ARP9) of Arabidopsis thaliana (Mouse-ear cress).